Here is a 227-residue protein sequence, read N- to C-terminus: ATP phosphoribosyltransferase (227 aa).

Belongs to the ATP phosphoribosyltransferase family. Short subfamily. As to quaternary structure, heteromultimer composed of HisG and HisZ subunits.

It is found in the cytoplasm. The enzyme catalyses 1-(5-phospho-beta-D-ribosyl)-ATP + diphosphate = 5-phospho-alpha-D-ribose 1-diphosphate + ATP. Its pathway is amino-acid biosynthesis; L-histidine biosynthesis; L-histidine from 5-phospho-alpha-D-ribose 1-diphosphate: step 1/9. Functionally, catalyzes the condensation of ATP and 5-phosphoribose 1-diphosphate to form N'-(5'-phosphoribosyl)-ATP (PR-ATP). Has a crucial role in the pathway because the rate of histidine biosynthesis seems to be controlled primarily by regulation of HisG enzymatic activity. This is ATP phosphoribosyltransferase from Rhodospirillum rubrum (strain ATCC 11170 / ATH 1.1.1 / DSM 467 / LMG 4362 / NCIMB 8255 / S1).